We begin with the raw amino-acid sequence, 440 residues long: L-seryl-tRNA(Sec) selenium transferase (440 aa).

Position 282 is an N6-(pyridoxal phosphate)lysine (lysine 282).

The protein belongs to the SelA family. The cofactor is pyridoxal 5'-phosphate.

The protein resides in the cytoplasm. It catalyses the reaction L-seryl-tRNA(Sec) + selenophosphate + H(+) = L-selenocysteinyl-tRNA(Sec) + phosphate. The protein operates within aminoacyl-tRNA biosynthesis; selenocysteinyl-tRNA(Sec) biosynthesis; selenocysteinyl-tRNA(Sec) from L-seryl-tRNA(Sec) (bacterial route): step 1/1. Functionally, converts seryl-tRNA(Sec) to selenocysteinyl-tRNA(Sec) required for selenoprotein biosynthesis. In Campylobacter jejuni subsp. jejuni serotype O:6 (strain 81116 / NCTC 11828), this protein is L-seryl-tRNA(Sec) selenium transferase.